Here is a 336-residue protein sequence, read N- to C-terminus: Glycerol-3-phosphate dehydrogenase [NAD(P)+] (336 aa).

Positions 11, 33, and 105 each coordinate NADPH. Sn-glycerol 3-phosphate is bound by residues K105, G141, and S143. Residue A145 participates in NADPH binding. Positions 196, 249, 259, 260, and 261 each coordinate sn-glycerol 3-phosphate. Catalysis depends on K196, which acts as the Proton acceptor. R260 contacts NADPH. V284 and E286 together coordinate NADPH.

The protein belongs to the NAD-dependent glycerol-3-phosphate dehydrogenase family.

Its subcellular location is the cytoplasm. It carries out the reaction sn-glycerol 3-phosphate + NAD(+) = dihydroxyacetone phosphate + NADH + H(+). The catalysed reaction is sn-glycerol 3-phosphate + NADP(+) = dihydroxyacetone phosphate + NADPH + H(+). Its pathway is membrane lipid metabolism; glycerophospholipid metabolism. In terms of biological role, catalyzes the reduction of the glycolytic intermediate dihydroxyacetone phosphate (DHAP) to sn-glycerol 3-phosphate (G3P), the key precursor for phospholipid synthesis. The protein is Glycerol-3-phosphate dehydrogenase [NAD(P)+] of Delftia acidovorans (strain DSM 14801 / SPH-1).